Here is a 165-residue protein sequence, read N- to C-terminus: UPF0114 protein in repA1-repA2 intergenic region (165 aa).

3 helical membrane-spanning segments follow: residues 10-32 (YASR…LLTL), 53-75 (LILI…MVMF), and 136-155 (IMWC…GMAC).

It belongs to the UPF0114 family.

It localises to the cell membrane. The protein is UPF0114 protein in repA1-repA2 intergenic region of Buchnera aphidicola subsp. Geoica urticularia.